We begin with the raw amino-acid sequence, 436 residues long: Testican-3 (436 aa).

An N-terminal signal peptide occupies residues 1 to 22 (MLKVSALLCVCAAAWCSQTLAA). 8 cysteine pairs are disulfide-bonded: Cys-90–Cys-101, Cys-95–Cys-111, Cys-139–Cys-169, Cys-142–Cys-162, Cys-151–Cys-183, Cys-317–Cys-341, Cys-352–Cys-359, and Cys-361–Cys-380. A Kazal-like domain is found at 133-185 (GLPSSTCKPCPIAYASPVCGSDGHSYSSQCKLEYQACVLGKQISIKCEGRCPC). One can recognise a Thyroglobulin type-1 domain in the interval 314–380 (DPPCHTELSN…GSRINGVADC (67 aa)). 2 O-linked (Xyl...) (glycosaminoglycan) serine glycosylation sites follow: Ser-387 and Ser-392. The segment at 393 to 436 (GDFREWTDDEGEEDDIMNDKDDIEDDDEDEGDDDDDGDVHDGYI) is disordered. Over residues 399-430 (TDDEGEEDDIMNDKDDIEDDDEDEGDDDDDGD) the composition is skewed to acidic residues.

Contains chondroitin sulfate and heparan sulfate O-linked oligosaccharides. In terms of tissue distribution, expressed in brain.

The protein localises to the secreted. It localises to the extracellular space. It is found in the extracellular matrix. May participate in diverse steps of neurogenesis. Inhibits the processing of pro-matrix metalloproteinase 2 (MMP-2) by MT1-MMP and MT3-MMP. May interfere with tumor invasion. In Mus musculus (Mouse), this protein is Testican-3 (Spock3).